Here is a 376-residue protein sequence, read N- to C-terminus: N-acetyldiaminopimelate deacetylase (376 aa).

Asp-70 is a catalytic residue. Residue Glu-129 is the Proton acceptor of the active site.

Belongs to the peptidase M20A family. N-acetyldiaminopimelate deacetylase subfamily.

The enzyme catalyses N-acetyl-(2S,6S)-2,6-diaminopimelate + H2O = (2S,6S)-2,6-diaminopimelate + acetate. The protein operates within amino-acid biosynthesis; L-lysine biosynthesis via DAP pathway; LL-2,6-diaminopimelate from (S)-tetrahydrodipicolinate (acetylase route): step 3/3. Functionally, catalyzes the conversion of N-acetyl-diaminopimelate to diaminopimelate and acetate. This is N-acetyldiaminopimelate deacetylase from Geobacillus sp. (strain WCH70).